The primary structure comprises 553 residues: Probable inactive serine/threonine-protein kinase samkD (553 aa).

Residues 24–90 (WDNETVCKWL…FEYQILKNCY (67 aa)) form the SAM domain. One can recognise a Protein kinase domain in the interval 134 to 393 (YQYIETISKN…SKELLKSFWF (260 aa)). ATP contacts are provided by residues 140–148 (ISKNKFCEI) and K165.

Belongs to the protein kinase superfamily. Ser/Thr protein kinase family.

In Dictyostelium discoideum (Social amoeba), this protein is Probable inactive serine/threonine-protein kinase samkD (samkD).